Consider the following 130-residue polypeptide: MAQAQYAGTGRRKNAVARVRLVPGTGKITVNKKDLEEYIPHADLRLVINQPFAVTSTEGSYDVHVNVVGGGYAGQSGAIRHGIARALLQVDPDFRDSLKRAGLLTRDARMVERKKPGLKKARKASQFSKR.

It belongs to the universal ribosomal protein uS9 family.

This Streptococcus thermophilus (strain CNRZ 1066) protein is Small ribosomal subunit protein uS9.